The following is a 1036-amino-acid chain: Lethal(2) giant larvae protein homolog 1 (1036 aa).

10 WD repeats span residues 38–71 (SALA…FTGL), 78–119 (VTQM…GLSF), 139–175 (VTVV…GQTL), 199–233 (SLQG…EHVF), 239–271 (LESL…GSPP), 289–331 (AINK…ETLV), 339–373 (VIDF…VLDL), 395–473 (TCSA…YKLS), 517–592 (QKVA…RMLI), and 601–662 (TAVT…LRQS). S662 is subject to Phosphoserine. Basic residues predominate over residues 667–677 (RKSRVSGKKRT). Residues 667 to 688 (RKSRVSGKKRTPAASSKLQEAN) are disordered. Residues 679–688 (AASSKLQEAN) are compositionally biased toward polar residues. WD repeat units lie at residues 722-782 (VRCL…KEVQ), 791-843 (AIAV…VSAK), 848-901 (LTAH…VHYS), and 915-938 (VFTR…SLSA). Residue T957 is modified to Phosphothreonine. Phosphoserine is present on residues S964, S982, and S989. A disordered region spans residues 980–1002 (PESCEGSPSSAHSKRADTMEPPE).

The protein belongs to the WD repeat L(2)GL family. As to quaternary structure, associated with nonmuscle myosin II heavy chain. Interacts with PRKCI/aPKC, PARD6B/Par-6 and PARD6A. Interacts with STX4A. Interacts with RAB10 (GDP-bound form); the interaction is direct and promotes RAB10 association with membranes and activation through competition with the Rab inhibitor GDI1. Interacts with DCAF1. In terms of processing, phosphorylated by PRKCI. In terms of tissue distribution, widely expressed. Expressed in brain, ovary, testis, with moderate expression in lever, uterus, lung and kidney.

It is found in the early endosome membrane. Its subcellular location is the golgi apparatus. The protein localises to the trans-Golgi network membrane. The protein resides in the cell projection. It localises to the axon. It is found in the golgi apparatus membrane. Its subcellular location is the cytoplasm. The protein localises to the cytoskeleton. Cortical cytoskeleton protein found in a complex involved in maintaining cell polarity and epithelial integrity. Involved in the regulation of mitotic spindle orientation, proliferation, differentiation and tissue organization of neuroepithelial cells. Involved in axonogenesis through RAB10 activation thereby regulating vesicular membrane trafficking toward the axonal plasma membrane. This is Lethal(2) giant larvae protein homolog 1 (LLGL1) from Bos taurus (Bovine).